The chain runs to 382 residues: D-galactonate dehydratase 1 (382 aa).

Asp183 serves as a coordination point for Mg(2+). The Proton donor role is filled by His185. 2 residues coordinate Mg(2+): Glu209 and Glu235. His285 acts as the Proton acceptor in catalysis.

This sequence belongs to the mandelate racemase/muconate lactonizing enzyme family. GalD subfamily. It depends on Mg(2+) as a cofactor.

The catalysed reaction is D-galactonate = 2-dehydro-3-deoxy-D-galactonate + H2O. Its pathway is carbohydrate acid metabolism; D-galactonate degradation; D-glyceraldehyde 3-phosphate and pyruvate from D-galactonate: step 1/3. Functionally, catalyzes the dehydration of D-galactonate to 2-keto-3-deoxy-D-galactonate. This Escherichia coli (strain SMS-3-5 / SECEC) protein is D-galactonate dehydratase 1.